We begin with the raw amino-acid sequence, 208 residues long: Histone H1.3 (208 aa).

Position 2 is an N-acetylserine (Ser2). Residues Ala37–Glu113 enclose the H15 domain. The segment at Glu113 to Thr208 is disordered. Composition is skewed to basic residues over residues Lys148–Lys158 and Lys165–Pro191. Positions Lys192–Thr208 are enriched in low complexity.

This sequence belongs to the histone H1/H5 family.

It localises to the nucleus. It is found in the chromosome. Its function is as follows. Histones H1 are necessary for the condensation of nucleosome chains into higher-order structures. This is Histone H1.3 (hil-3) from Caenorhabditis elegans.